A 229-amino-acid polypeptide reads, in one-letter code: 2,3-bisphosphoglycerate-dependent phosphoglycerate mutase 2 (229 aa).

Residues 8–15, 21–22, Arg60, 87–90, Lys98, 114–115, and 183–184 each bind substrate; these read RHGQSEWN, TG, ERHY, RR, and GN. Residue His9 is the Tele-phosphohistidine intermediate of the active site. Glu87 acts as the Proton donor/acceptor in catalysis.

It belongs to the phosphoglycerate mutase family. BPG-dependent PGAM subfamily.

The enzyme catalyses (2R)-2-phosphoglycerate = (2R)-3-phosphoglycerate. The protein operates within carbohydrate degradation; glycolysis; pyruvate from D-glyceraldehyde 3-phosphate: step 3/5. Catalyzes the interconversion of 2-phosphoglycerate and 3-phosphoglycerate. The sequence is that of 2,3-bisphosphoglycerate-dependent phosphoglycerate mutase 2 from Latilactobacillus sakei subsp. sakei (strain 23K) (Lactobacillus sakei subsp. sakei).